The chain runs to 202 residues: Small ribosomal subunit protein uS4c (202 aa).

The 64-residue stretch at 89–152 folds into the S4 RNA-binding domain; that stretch reads MRLDNIIFRL…QSNTFINNCI (64 aa).

The protein belongs to the universal ribosomal protein uS4 family. As to quaternary structure, part of the 30S ribosomal subunit. Contacts protein S5. The interaction surface between S4 and S5 is involved in control of translational fidelity.

It is found in the plastid. Its function is as follows. One of the primary rRNA binding proteins, it binds directly to 16S rRNA where it nucleates assembly of the body of the 30S subunit. In terms of biological role, with S5 and S12 plays an important role in translational accuracy. In Epifagus virginiana (Beechdrops), this protein is Small ribosomal subunit protein uS4c (rps4).